The primary structure comprises 154 residues: NAD(P)H-quinone oxidoreductase subunit N (154 aa).

It belongs to the complex I NdhN subunit family. As to quaternary structure, NDH-1 can be composed of about 15 different subunits; different subcomplexes with different compositions have been identified which probably have different functions.

The protein localises to the cellular thylakoid membrane. The catalysed reaction is a plastoquinone + NADH + (n+1) H(+)(in) = a plastoquinol + NAD(+) + n H(+)(out). It catalyses the reaction a plastoquinone + NADPH + (n+1) H(+)(in) = a plastoquinol + NADP(+) + n H(+)(out). NDH-1 shuttles electrons from an unknown electron donor, via FMN and iron-sulfur (Fe-S) centers, to quinones in the respiratory and/or the photosynthetic chain. The immediate electron acceptor for the enzyme in this species is believed to be plastoquinone. Couples the redox reaction to proton translocation, and thus conserves the redox energy in a proton gradient. Cyanobacterial NDH-1 also plays a role in inorganic carbon-concentration. The chain is NAD(P)H-quinone oxidoreductase subunit N from Prochlorococcus marinus (strain NATL2A).